The chain runs to 199 residues: Pyridoxine/pyridoxamine 5'-phosphate oxidase (199 aa).

FMN contacts are provided by residues 44 to 49 (RTVLLK), 59 to 60 (YT), Lys-66, and Gln-91. Residue Lys-49 participates in substrate binding. Residues Tyr-109, Arg-113, and Ser-117 each contribute to the substrate site. Residues 126–127 (QS) and Trp-171 contribute to the FMN site. Position 177–179 (177–179 (RLH)) interacts with substrate. Arg-181 is an FMN binding site.

This sequence belongs to the pyridoxamine 5'-phosphate oxidase family. Homodimer. Requires FMN as cofactor.

The enzyme catalyses pyridoxamine 5'-phosphate + O2 + H2O = pyridoxal 5'-phosphate + H2O2 + NH4(+). The catalysed reaction is pyridoxine 5'-phosphate + O2 = pyridoxal 5'-phosphate + H2O2. The protein operates within cofactor metabolism; pyridoxal 5'-phosphate salvage; pyridoxal 5'-phosphate from pyridoxamine 5'-phosphate: step 1/1. It functions in the pathway cofactor metabolism; pyridoxal 5'-phosphate salvage; pyridoxal 5'-phosphate from pyridoxine 5'-phosphate: step 1/1. Its function is as follows. Catalyzes the oxidation of either pyridoxine 5'-phosphate (PNP) or pyridoxamine 5'-phosphate (PMP) into pyridoxal 5'-phosphate (PLP). The protein is Pyridoxine/pyridoxamine 5'-phosphate oxidase of Xanthomonas campestris pv. campestris (strain 8004).